Consider the following 2467-residue polypeptide: Polyprotein P1234 (2467 aa).

The region spanning 28 to 257 (EARQVTDNDH…EDRSLLRSWH (230 aa)) is the Alphavirus-like MT domain. The tract at residues 242–261 (GSTIYTEDRSLLRSWHLPNV) is nsP1 membrane-binding. Residue cysteine 417 is the site of S-palmitoyl cysteine; by host attachment. Positions 688–839 (DLVDPPFHEF…HDICTEVYHK (152 aa)) constitute a (+)RNA virus helicase ATP-binding domain. Residue 719–726 (GVPGSGKS) coordinates a ribonucleoside 5'-triphosphate. The (+)RNA virus helicase C-terminal domain occupies 840–988 (SISRRCTQTV…LDDWQREHDA (149 aa)). The 320-residue stretch at 1001–1320 (DVFQNKVNVC…VVLDNIYQGS (320 aa)) folds into the Peptidase C9 domain. Residues 1002–1021 (VFQNKVNVCWAKALEPVLAT) are nucleolus localization signal. Cysteine 1010 (for cysteine protease nsP2 activity) is an active-site residue. A Nuclear export signal motif is present at residues 1054 to 1063 (TRFFGVDLDS). Histidine 1079 functions as the For cysteine protease nsP2 activity in the catalytic mechanism. The Nuclear localization signal signature appears at 1177–1181 (PGKKV). The Macro domain occupies 1328–1486 (APAYRVIRGD…RIIEAIHRKE (159 aa)). ADP-D-ribose is bound by residues aspartate 1337, asparagine 1351, glycine 1359, glycine 1438, isoleucine 1439, and tyrosine 1440. Cysteine 1588, cysteine 1590, cysteine 1613, and cysteine 1631 together coordinate Zn(2+). The tract at residues 1798 to 1833 (RPVPAPRRRPIPSPRSTASAPPVPKPRRTKYQQPPG) is disordered. The tract at residues 1831-1847 (PPGVARAISEAELDEYI) is binding to host FXR family members. One can recognise a RdRp catalytic domain in the interval 2224-2339 (DPVLETDIAS…HGVVSDTLMA (116 aa)).

Interacts with non-structural protein 3. Interacts with RNA-directed RNA polymerase nsP4. Interacts with protease nsP2. interacts with itself. As to quaternary structure, interacts with mRNA-capping enzyme nsP1. Interacts with host DDX1. Interacts with host DDX3. Interacts (via C-terminus) with host FXR1; this interaction inhibits the formation of host stress granules on viral mRNAs and the nsp3-FXR1 complexes bind viral RNAs and probably orchestrate the assembly of viral replication complexes. Interacts (via C-terminus) with host FXR2; this interaction inhibits the formation of host stress granules on viral mRNAs and the nsp3-FXR2 complexes bind viral RNAs and probably orchestrate the assembly of viral replication complexes. Interacts (via C-terminus) with host FMR1; this interaction inhibits the formation of host stress granules on viral mRNAs and the nsp3-FMR1 complexes bind viral RNAs and probably orchestrate the assembly of viral replication complexes. In terms of assembly, interacts with mRNA-capping enzyme nsP1. Interacts with protease nsP2. interacts with itself. Interacts with RNA-directed RNA polymerase nsP4. Interacts with mRNA-capping enzyme nsP1. Interacts with KPNA1/karyopherin-alpha1; this interaction probably allows the active transport of protease nsP2 into the host nucleus. Mg(2+) serves as cofactor. Mn(2+) is required as a cofactor. Post-translationally, specific enzymatic cleavages in vivo yield mature proteins. The processing of the polyprotein is temporally regulated. In early stages (1.7 hpi), P1234 is first cleaved in trans through its nsP2 protease activity, releasing P123' and nsP4, which associate to form the early replication complex. At the same time, P1234 is also cut at the nsP1/nsP2 site early in infection but with lower efficiency. After replication of the viral minus-strand RNAs (4 hpi), the polyproteins are cut at the nsP1/nsP2 and nsP2/nsP3 sites very efficiently, preventing accumulation of P123' and P1234 and allowing the formation of the late replication complex. NsP3'/nsP4 site is not cleaved anymore and P34 is produced rather than nsP4. Specific enzymatic cleavages in vivo yield mature proteins. The processing of the polyprotein is temporally regulated. In early stages (1.7 hpi), P123 is cleaved at the nsP1/nsP2 site with low efficiency. After replication of the viral minus-strand RNAs (4 hpi), the polyproteins are cut at the nsP1/nsP2 and nsP2/nsP3 sites very efficiently, preventing accumulation of P123 and allowing the formation of the late replication complex. In terms of processing, specific enzymatic cleavages in vivo yield mature proteins. The processing of the polyprotein is temporally regulated. In early stages (1.7 hpi), P123' is cleaved at the nsP1/nsP2 site with low efficiency. After replication of the viral minus-strand RNAs (4 hpi), the polyproteins are cut at the nsP1/nsP2 and nsP2/nsP3 sites very efficiently, preventing accumulation of P123' and allowing the formation of the late replication complex. Post-translationally, palmitoylated by host palmitoyltransferases ZDHHC2 and ZDHHC19. Phosphorylated by host on serines and threonines. In terms of processing, ubiquitinated; targets the protein for rapid degradation via the ubiquitin system. Nsp4 is present in extremely low quantities due to low frequency of translation through the amber stop-codon and the degradation by the ubiquitin pathway.

Its subcellular location is the host cytoplasmic vesicle membrane. The protein resides in the host cell membrane. It localises to the host cell projection. It is found in the host filopodium. The protein localises to the host nucleus. Its subcellular location is the host cytoplasm. It carries out the reaction GTP + S-adenosyl-L-methionine = N(7)-methyl-GTP + S-adenosyl-L-homocysteine. The enzyme catalyses N(7)-methyl-GTP + L-histidyl-[protein] = N(tele)-(N(7)-methylguanosine 5'-phospho)-L-histidyl-[protein] + diphosphate. It catalyses the reaction N(tele)-(N(7)-methylguanosine 5'-phospho)-L-histidyl-[protein] + a 5'-end diphospho-(purine-ribonucleoside) in mRNA + H(+) = a 5'-end (N(7)-methyl 5'-triphosphoguanosine)-(purine-ribonucleoside) in mRNA + L-histidyl-[protein]. The catalysed reaction is a 5'-end triphospho-ribonucleoside in mRNA + H2O = a 5'-end diphospho-ribonucleoside in mRNA + phosphate + H(+). It carries out the reaction a ribonucleoside 5'-triphosphate + H2O = a ribonucleoside 5'-diphosphate + phosphate + H(+). The enzyme catalyses ATP + H2O = ADP + phosphate + H(+). It catalyses the reaction RNA(n) + a ribonucleoside 5'-triphosphate = RNA(n+1) + diphosphate. The catalysed reaction is 4-O-(ADP-D-ribosyl)-L-aspartyl-[protein] + H2O = L-aspartyl-[protein] + ADP-D-ribose + H(+). It carries out the reaction 5-O-(ADP-D-ribosyl)-L-glutamyl-[protein] + H2O = L-glutamyl-[protein] + ADP-D-ribose + H(+). The enzyme catalyses RNA(n) + ATP = RNA(n)-3'-adenine ribonucleotide + diphosphate. It catalyses the reaction ADP-alpha-D-ribose 1''-phosphate + H2O = ADP-D-ribose + phosphate. Inhibited by sinefungin. In terms of biological role, inactive precursor of the viral replicase, which is activated by cleavages carried out by the viral protease nsP2. Its function is as follows. The early replication complex formed by the polyprotein P123 and nsP4 synthesizes the minus-strand RNAs (antigenome). Polyprotein P123 is a short-lived polyprotein that accumulates during early stage of infection. As soon P123 is cleaved into mature proteins, the plus-strand RNAs synthesis begins. Functionally, the early replication complex formed by the polyprotein P123' and nsP4 synthesizes minus-strand RNAs (antigenome). Polyprotein P123' is a short-lived polyprotein that accumulates during early stage of infection. As soon P123' is cleaved into mature proteins, the plus-strand RNAs synthesis begins. Cytoplasmic capping enzyme that catalyzes two virus-specific reactions: methyltransferase and nsP1 guanylyltransferase. mRNA-capping is necessary since all viral RNAs are synthesized in the cytoplasm, and host capping enzymes are restricted to the nucleus. The enzymatic reaction involves a covalent link between 7-methyl-GMP and nsP1, whereas eukaryotic capping enzymes form a covalent complex only with GMP. NsP1 capping consists in the following reactions: GTP is first methylated into 7-methyl-GMP and then is covalently linked to nsP1 to form the m7GMp-nsP1 complex from which 7-methyl-GMP complex is transferred to the mRNA to create the cap structure. NsP1 is also needed for the initiation of the minus-strand RNAs synthesis. Probably serves as a membrane anchor for the replication complex composed of nsP1-nsP4. Nsp1 is needed for the initiation of the minus-strand RNAs synthesis. Palmitoylated nsP1 is remodeling host cell cytoskeleton, and induces filopodium-like structure formation at the surface of the host cell. In terms of biological role, multifunctional protein whose N-terminus is part of the RNA polymerase complex and displays NTPase, RNA triphosphatase and helicase activities. NTPase and RNA triphosphatase are involved in viral RNA capping and helicase keeps a check on the dsRNA replication intermediates. The C-terminus harbors a protease that specifically cleaves the polyproteins and releases the mature proteins. Required for the shutoff of minus-strand RNAs synthesis. Inhibits host translation to ensure maximal viral gene expression and evade host immune response. Its function is as follows. Seems to be essential for minus-strand RNAs and subgenomic 26S mRNAs synthesis. Displays mono-ADP-ribosylhydrolase activity. ADP-ribosylation is a post-translational modification that controls various processes of the host cell and the virus probably needs to revert it for optimal viral replication. Binds proteins of FXR and G3BP families and sequesters them into the viral RNA replication complexes thereby inhibiting the formation of host stress granules on viral mRNAs. The nsp3-FXR and nsp3-G3BP complexes bind viral RNAs and probably orchestrate the assembly of viral replication complexes, thanks to the ability of G3BP and FXR family members to self-assemble and bind DNA. Functionally, seems to be essential for minus-strand RNAs and subgenomic 26S mRNAs synthesis. Displays mono-ADP-ribosylhydrolase activity. ADP-ribosylation is a post-translational modification that controls various processes of the host cell and the virus probably needs to revert it for optimal viral replication. Binds proteins of FXR and G3BP families and sequesters them into the viral RNA replication complexes thereby inhibiting the formation of host stress granules on viral mRNAs. The nsp3'-FXR and nsp3-G3BP complexes bind viral RNAs and probably orchestrate the assembly of viral replication complexes, thanks to the ability of G3BP and FXR family members to self-assemble and bind DNA. RNA dependent RNA polymerase. Replicates genomic and antigenomic RNA by recognizing replications specific signals. The early replication complex formed by the polyprotein P123 and nsP4 synthesizes minus-strand RNAs. The late replication complex composed of fully processed nsP1-nsP4 is responsible for the production of genomic and subgenomic plus-strand RNAs. The protein is Polyprotein P1234 of Western equine encephalitis virus (WEEV).